Reading from the N-terminus, the 290-residue chain is Non-homologous end joining protein Ku (290 aa).

Residues 11 to 183 (TFGLISMPVR…EAPKITSEVK (173 aa)) form the Ku domain. Positions 253 to 290 (MKDQKKGSRLAEVDKESTVQMTPKKPAVKERRGRKRVA) are disordered. Basic and acidic residues predominate over residues 254 to 269 (KDQKKGSRLAEVDKES).

This sequence belongs to the prokaryotic Ku family. As to quaternary structure, homodimer. Interacts with LigD.

Its function is as follows. With LigD forms a non-homologous end joining (NHEJ) DNA repair enzyme, which repairs dsDNA breaks with reduced fidelity. Binds linear dsDNA with 5'- and 3'- overhangs but not closed circular dsDNA nor ssDNA. Recruits and stimulates the ligase activity of LigD. In Koribacter versatilis (strain Ellin345), this protein is Non-homologous end joining protein Ku.